The chain runs to 342 residues: N-acetyl-gamma-glutamyl-phosphate reductase (342 aa).

C147 is an active-site residue.

The protein belongs to the NAGSA dehydrogenase family. Type 1 subfamily.

It localises to the cytoplasm. It catalyses the reaction N-acetyl-L-glutamate 5-semialdehyde + phosphate + NADP(+) = N-acetyl-L-glutamyl 5-phosphate + NADPH + H(+). It functions in the pathway amino-acid biosynthesis; L-arginine biosynthesis; N(2)-acetyl-L-ornithine from L-glutamate: step 3/4. Catalyzes the NADPH-dependent reduction of N-acetyl-5-glutamyl phosphate to yield N-acetyl-L-glutamate 5-semialdehyde. The protein is N-acetyl-gamma-glutamyl-phosphate reductase of Campylobacter jejuni subsp. jejuni serotype O:2 (strain ATCC 700819 / NCTC 11168).